The chain runs to 337 residues: 4-hydroxy-3-methylbut-2-enyl diphosphate reductase (337 aa).

Cys38 lines the [4Fe-4S] cluster pocket. The (2E)-4-hydroxy-3-methylbut-2-enyl diphosphate site is built by His67 and His100. Residues His67 and His100 each contribute to the dimethylallyl diphosphate site. His67 and His100 together coordinate isopentenyl diphosphate. A [4Fe-4S] cluster-binding site is contributed by Cys122. Residue His150 coordinates (2E)-4-hydroxy-3-methylbut-2-enyl diphosphate. His150 lines the dimethylallyl diphosphate pocket. His150 provides a ligand contact to isopentenyl diphosphate. The Proton donor role is filled by Glu152. Thr190 contacts (2E)-4-hydroxy-3-methylbut-2-enyl diphosphate. Cys220 lines the [4Fe-4S] cluster pocket. (2E)-4-hydroxy-3-methylbut-2-enyl diphosphate contacts are provided by Ser248, Ser249, Asn250, and Ser293. Residues Ser248, Ser249, Asn250, and Ser293 each coordinate dimethylallyl diphosphate. Positions 248, 249, 250, and 293 each coordinate isopentenyl diphosphate.

This sequence belongs to the IspH family. The cofactor is [4Fe-4S] cluster.

It carries out the reaction isopentenyl diphosphate + 2 oxidized [2Fe-2S]-[ferredoxin] + H2O = (2E)-4-hydroxy-3-methylbut-2-enyl diphosphate + 2 reduced [2Fe-2S]-[ferredoxin] + 2 H(+). The enzyme catalyses dimethylallyl diphosphate + 2 oxidized [2Fe-2S]-[ferredoxin] + H2O = (2E)-4-hydroxy-3-methylbut-2-enyl diphosphate + 2 reduced [2Fe-2S]-[ferredoxin] + 2 H(+). It functions in the pathway isoprenoid biosynthesis; dimethylallyl diphosphate biosynthesis; dimethylallyl diphosphate from (2E)-4-hydroxy-3-methylbutenyl diphosphate: step 1/1. Its pathway is isoprenoid biosynthesis; isopentenyl diphosphate biosynthesis via DXP pathway; isopentenyl diphosphate from 1-deoxy-D-xylulose 5-phosphate: step 6/6. Its function is as follows. Catalyzes the conversion of 1-hydroxy-2-methyl-2-(E)-butenyl 4-diphosphate (HMBPP) into a mixture of isopentenyl diphosphate (IPP) and dimethylallyl diphosphate (DMAPP). Acts in the terminal step of the DOXP/MEP pathway for isoprenoid precursor biosynthesis. The chain is 4-hydroxy-3-methylbut-2-enyl diphosphate reductase from Mycolicibacterium vanbaalenii (strain DSM 7251 / JCM 13017 / BCRC 16820 / KCTC 9966 / NRRL B-24157 / PYR-1) (Mycobacterium vanbaalenii).